The primary structure comprises 149 residues: Histone H2A (149 aa).

Residues methionine 1–valine 23 show a composition bias toward basic residues. Disordered stretches follow at residues methionine 1–arginine 25 and lysine 127–alanine 149. A compositionally biased stretch (basic and acidic residues) spans lysine 127–serine 138. 2 consecutive short sequence motifs (SPKK motif) follow at residues serine 138–lysine 141 and serine 145–lysine 148.

This sequence belongs to the histone H2A family. The nucleosome is a histone octamer containing two molecules each of H2A, H2B, H3 and H4 assembled in one H3-H4 heterotetramer and two H2A-H2B heterodimers. The octamer wraps approximately 147 bp of DNA.

It localises to the nucleus. It is found in the chromosome. Its function is as follows. Core component of nucleosome. Nucleosomes wrap and compact DNA into chromatin, limiting DNA accessibility to the cellular machineries which require DNA as a template. Histones thereby play a central role in transcription regulation, DNA repair, DNA replication and chromosomal stability. DNA accessibility is regulated via a complex set of post-translational modifications of histones, also called histone code, and nucleosome remodeling. The sequence is that of Histone H2A from Petroselinum crispum (Parsley).